The primary structure comprises 149 residues: Transcriptional regulator MraZ (149 aa).

SpoVT-AbrB domains lie at 7–54 and 83–126; these read KYVN…GISH and AVQL…QPQN.

It belongs to the MraZ family. Forms oligomers.

The protein resides in the cytoplasm. Its subcellular location is the nucleoid. The chain is Transcriptional regulator MraZ from Rickettsia akari (strain Hartford).